Here is a 554-residue protein sequence, read N- to C-terminus: MSNETNSSNFIKNIIINDLETGKHDSIITRFPPEPNGYLHIGHAKSICLNFGLAKEFNGKANLRFDDTNPLKEDVEYVESIKEDVKWLGFDWNELNFASNYFDEMYKRALILIKKGKAYVCDLTQEEMREYRGTLTEPGKESPHRNRTIEENLDLFERMKNGEFKDGEKTLRAKIDMSSPNINLRDPIIYRISHSTHHNTGDKWCIYPMYAFAHPIEDAIEGITHSICTLEFEDQRPLYDWFVKECEMENIPRQIEFARLNINNTVMSKRKLKQLVDEGIVDGWDDPRVPTISGIRRKGYTAEALRNFCSEIGVSKVNSTVDSQMLDYFLRENLQPKAPLTMGVLRPLKLIITNYPEDKIEMLEIENNAKDESQGKRLVPFSRELYIEQDDFMEEPVKKYFRFFPGNEVRLKGAYFVKCTDVIKDENGNVVEIHGTYDPETKSGSGFTGRKVKSTIHWVDAKSAIPCEFRLFEPLILDDIPENEGKHFLEQINPNSLEILQGFVEPTQIKDAKPFDKFQFVRNGFFSIDNKYTTDEKFVFNRIVPLKSSFKPGK.

Residues 33 to 43 (PEPNGYLHIGH) carry the 'HIGH' region motif. Residues 34-36 (EPN) and 40-46 (HIGHAKS) each bind ATP. Positions 66 and 210 each coordinate L-glutamine. ATP is bound by residues Thr229, 259 to 260 (RL), and 267 to 269 (MSK). Residues 266 to 270 (VMSKR) carry the 'KMSKS' region motif.

It belongs to the class-I aminoacyl-tRNA synthetase family. Monomer.

It localises to the cytoplasm. It catalyses the reaction tRNA(Gln) + L-glutamine + ATP = L-glutaminyl-tRNA(Gln) + AMP + diphosphate. The chain is Glutamine--tRNA ligase from Clostridioides difficile (strain 630) (Peptoclostridium difficile).